Here is a 604-residue protein sequence, read N- to C-terminus: Procollagen galactosyltransferase 1 (604 aa).

The first 18 residues, 1–18 (MHLLCFFFLLLWTGPARS), serve as a signal peptide directing secretion. Residues N78, N166, N363, and N561 are each glycosylated (N-linked (GlcNAc...) asparagine). Over residues 570 to 580 (RARSRKSREQE) the composition is skewed to basic and acidic residues. The segment at 570-604 (RARSRKSREQEELSSEAQNTDVLQSPLDSTARDEL) is disordered. Over residues 584–597 (SEAQNTDVLQSPLD) the composition is skewed to polar residues. Positions 601 to 604 (RDEL) match the Prevents secretion from ER motif.

It belongs to the glycosyltransferase 25 family.

The protein localises to the endoplasmic reticulum lumen. It carries out the reaction (5R)-5-hydroxy-L-lysyl-[collagen] + UDP-alpha-D-galactose = (5R)-5-O-(beta-D-galactosyl)-5-hydroxy-L-lysyl-[collagen] + UDP + H(+). Beta-galactosyltransferase that transfers beta-galactose to hydroxylysine residues of type I collagen. By acting on collagen glycosylation, facilitates the formation of collagen triple helix. The protein is Procollagen galactosyltransferase 1 (colgalt1) of Danio rerio (Zebrafish).